A 326-amino-acid polypeptide reads, in one-letter code: Isopenicillin N synthase (326 aa).

Arg-84, Tyr-88, and Tyr-186 together coordinate isopenicillin N. 5 residues coordinate N-[(5S)-5-amino-5-carboxypentanoyl]-L-cysteinyl-D-valine: Arg-84, Tyr-88, Tyr-186, His-209, and Asp-211. The Fe2OG dioxygenase domain maps to 183 to 283 (LIRYPFLENY…RLSIPFFANL (101 aa)). 3 residues coordinate Fe(2+): His-209, Asp-211, and His-265. Position 274 (Arg-274) interacts with 2-oxoglutarate. Position 276 (Ser-276) interacts with isopenicillin N. Position 276 (Ser-276) interacts with N-[(5S)-5-amino-5-carboxypentanoyl]-L-cysteinyl-D-valine.

This sequence belongs to the iron/ascorbate-dependent oxidoreductase family. It depends on Fe cation as a cofactor. L-ascorbate is required as a cofactor.

The enzyme catalyses N-[(5S)-5-amino-5-carboxypentanoyl]-L-cysteinyl-D-valine + O2 = isopenicillin N + 2 H2O. It functions in the pathway antibiotic biosynthesis; penicillin G biosynthesis; penicillin G from L-alpha-aminoadipate and L-cysteine and L-valine: step 2/3. Functionally, removes, in the presence of oxygen, 4 hydrogen atoms from delta-L-(alpha-aminoadipyl)-L-cysteinyl-D-valine (ACV) to form the azetidinone and thiazolidine rings of isopenicillin. This is Isopenicillin N synthase (pcbC) from Flavobacterium sp. (strain SC 12,154).